Here is a 363-residue protein sequence, read N- to C-terminus: Putative glutamate--cysteine ligase 2 (363 aa).

It belongs to the glutamate--cysteine ligase type 2 family. YbdK subfamily.

It carries out the reaction L-cysteine + L-glutamate + ATP = gamma-L-glutamyl-L-cysteine + ADP + phosphate + H(+). Its function is as follows. ATP-dependent carboxylate-amine ligase which exhibits weak glutamate--cysteine ligase activity. This chain is Putative glutamate--cysteine ligase 2, found in Streptomyces coelicolor (strain ATCC BAA-471 / A3(2) / M145).